Reading from the N-terminus, the 443-residue chain is Xaa-Pro dipeptidase (443 aa).

Mn(2+)-binding residues include Asp-246, Asp-257, His-339, Glu-384, and Glu-423.

Belongs to the peptidase M24B family. Bacterial-type prolidase subfamily. The cofactor is Mn(2+).

The enzyme catalyses Xaa-L-Pro dipeptide + H2O = an L-alpha-amino acid + L-proline. Splits dipeptides with a prolyl residue in the C-terminal position. This Edwardsiella ictaluri (strain 93-146) protein is Xaa-Pro dipeptidase.